The sequence spans 199 residues: NAD(P)H-quinone oxidoreductase subunit 6, chloroplastic (199 aa).

Transmembrane regions (helical) follow at residues 13–33 (AILL…VLFT), 35–55 (IVYS…LYIL), 64–84 (VQIL…VMLI), 96–118 (WTVG…IAAI), and 157–177 (LPFE…ITMA).

It belongs to the complex I subunit 6 family. As to quaternary structure, NDH is composed of at least 16 different subunits, 5 of which are encoded in the nucleus.

The protein localises to the plastid. Its subcellular location is the chloroplast thylakoid membrane. It catalyses the reaction a plastoquinone + NADH + (n+1) H(+)(in) = a plastoquinol + NAD(+) + n H(+)(out). The catalysed reaction is a plastoquinone + NADPH + (n+1) H(+)(in) = a plastoquinol + NADP(+) + n H(+)(out). In terms of biological role, NDH shuttles electrons from NAD(P)H:plastoquinone, via FMN and iron-sulfur (Fe-S) centers, to quinones in the photosynthetic chain and possibly in a chloroplast respiratory chain. The immediate electron acceptor for the enzyme in this species is believed to be plastoquinone. Couples the redox reaction to proton translocation, and thus conserves the redox energy in a proton gradient. In Huperzia lucidula (Shining clubmoss), this protein is NAD(P)H-quinone oxidoreductase subunit 6, chloroplastic (ndhG).